A 432-amino-acid polypeptide reads, in one-letter code: Enolase (432 aa).

Residue glutamine 167 participates in (2R)-2-phosphoglycerate binding. Glutamate 209 functions as the Proton donor in the catalytic mechanism. Aspartate 246, glutamate 291, and aspartate 318 together coordinate Mg(2+). Residues lysine 343, arginine 372, serine 373, and lysine 394 each contribute to the (2R)-2-phosphoglycerate site. Lysine 343 (proton acceptor) is an active-site residue.

It belongs to the enolase family. In terms of assembly, component of the RNA degradosome, a multiprotein complex involved in RNA processing and mRNA degradation. Requires Mg(2+) as cofactor.

Its subcellular location is the cytoplasm. It is found in the secreted. It localises to the cell surface. It catalyses the reaction (2R)-2-phosphoglycerate = phosphoenolpyruvate + H2O. Its pathway is carbohydrate degradation; glycolysis; pyruvate from D-glyceraldehyde 3-phosphate: step 4/5. In terms of biological role, catalyzes the reversible conversion of 2-phosphoglycerate (2-PG) into phosphoenolpyruvate (PEP). It is essential for the degradation of carbohydrates via glycolysis. The chain is Enolase from Aliivibrio fischeri (strain ATCC 700601 / ES114) (Vibrio fischeri).